The primary structure comprises 299 residues: GTPase Era (299 aa).

The Era-type G domain occupies 5-175; that stretch reads RSGFVCFVGR…TDVLAGKLPP (171 aa). The G1 stretch occupies residues 13–20; that stretch reads GRPNTGKS. Residue 13-20 participates in GTP binding; the sequence is GRPNTGKS. Positions 39 to 43 are G2; it reads QTTRH. The segment at 60–63 is G3; it reads DTPG. Residues 60-64 and 124-127 contribute to the GTP site; these read DTPGL and TKID. Positions 124–127 are G4; sequence TKID. Residues 154–156 are G5; the sequence is VSA. Residues 206–285 enclose the KH type-2 domain; sequence VRDELPHSLA…YLDLRVKIAK (80 aa).

Belongs to the TRAFAC class TrmE-Era-EngA-EngB-Septin-like GTPase superfamily. Era GTPase family. In terms of assembly, monomer.

The protein resides in the cell envelope. The protein localises to the secreted. Its subcellular location is the cell wall. Functionally, exhibits GTPase activity. Binds RNA but is probably not involved in ribosome assembly in mycobacteria. This is GTPase Era from Mycobacterium sp. (strain JLS).